A 329-amino-acid polypeptide reads, in one-letter code: Peroxidase 58 (329 aa).

An N-terminal signal peptide occupies residues 1–23; that stretch reads MGLSKTIPLVLLPILMFGVLSNA. 4 disulfide bridges follow: Cys34–Cys116, Cys67–Cys72, Cys122–Cys325, and Cys201–Cys234. A glycan (N-linked (GlcNAc...) asparagine) is linked at Asn36. His65 functions as the Proton acceptor in the catalytic mechanism. Ca(2+)-binding residues include Asp66, Val69, Gly71, Asp73, and Ser75. A substrate-binding site is contributed by Pro164. Residue His194 participates in heme b binding. Thr195 lines the Ca(2+) pocket. N-linked (GlcNAc...) asparagine glycosylation occurs at Asn210. Residues Asp247, Ser250, and Asp255 each contribute to the Ca(2+) site.

It belongs to the peroxidase family. Classical plant (class III) peroxidase subfamily. The cofactor is heme b. Requires Ca(2+) as cofactor.

It is found in the secreted. It catalyses the reaction 2 a phenolic donor + H2O2 = 2 a phenolic radical donor + 2 H2O. Removal of H(2)O(2), oxidation of toxic reductants, biosynthesis and degradation of lignin, suberization, auxin catabolism, response to environmental stresses such as wounding, pathogen attack and oxidative stress. These functions might be dependent on each isozyme/isoform in each plant tissue. The polypeptide is Peroxidase 58 (PER58) (Arabidopsis thaliana (Mouse-ear cress)).